Here is a 341-residue protein sequence, read N- to C-terminus: Dihydroorotate dehydrogenase (quinone) (341 aa).

FMN is bound by residues 61-65 (AGLDK) and T85. K65 contributes to the substrate binding site. Residue 110-114 (NRMGF) coordinates substrate. FMN-binding residues include N138 and N171. N171 provides a ligand contact to substrate. Residue S174 is the Nucleophile of the active site. Position 176 (N176) interacts with substrate. FMN contacts are provided by K216 and T244. Residue 245–246 (NT) coordinates substrate. FMN-binding positions include G267, G296, and 317–318 (YS).

The protein belongs to the dihydroorotate dehydrogenase family. Type 2 subfamily. As to quaternary structure, monomer. The cofactor is FMN.

The protein localises to the cell membrane. It catalyses the reaction (S)-dihydroorotate + a quinone = orotate + a quinol. It functions in the pathway pyrimidine metabolism; UMP biosynthesis via de novo pathway; orotate from (S)-dihydroorotate (quinone route): step 1/1. In terms of biological role, catalyzes the conversion of dihydroorotate to orotate with quinone as electron acceptor. This Pseudomonas putida (strain GB-1) protein is Dihydroorotate dehydrogenase (quinone).